We begin with the raw amino-acid sequence, 731 residues long: Radial spoke head 10 homolog B (731 aa).

Residues 1–69 are disordered; that stretch reads MARGDNMKSS…PNENQPIGEH (69 aa). A compositionally biased stretch (polar residues) spans 7 to 17; sequence MKSSNKSTPEP. Low complexity-rich tracts occupy residues 18–36 and 46–57; these read TLSKTLVESSTSSLLSESV and SSSAVCSASTVS. MORN repeat units follow at residues 86–108, 109–131, 132–154, 155–177, 179–201, 204–226, 227–249, 251–273, 284–306, and 307–329; these read YEGEKCGEMFHGEGVAYFQGGHV, YKGSFSHGLMHGYGEYIWSDGLK, YQGDFKVNVPMGHGTYTWLNGST, YEGEVHQGIRHGVGMYKCVKTLT, YRGQWYLGKRQGQGEMFYNQEAT, YKGEWVNNCREGWGKRCYPSGNV, YEGQWRNNVRHGEGTMRWIDLDQ, YSGQWINGIQEGKGTHTWFRKRA, YTGDFVQAMRHGQGQFLYASGAL, and YCGQWKYDKKHGQGRYIFENGRV. 2 disordered regions span residues 353–377 and 709–731; these read TTPFPDENDSSKGASQSSSNASPLG and KQEQDADGNELCPVTTTSVTSIH. Low complexity predominate over residues 363 to 377; sequence SKGASQSSSNASPLG. The segment covering 722–731 has biased composition (polar residues); the sequence is VTTTSVTSIH.

It localises to the cytoplasm. The protein resides in the cytoskeleton. It is found in the cilium axoneme. Its subcellular location is the cell projection. The protein localises to the cilium. It localises to the flagellum. Functionally, may function as part of axonemal radial spoke complexes. Radial spoke complexes are important for ciliary motility. In Danio rerio (Zebrafish), this protein is Radial spoke head 10 homolog B (rsph10b).